A 92-amino-acid polypeptide reads, in one-letter code: Mediator-associated protein 3 (92 aa).

One can recognise a DEK-C domain in the interval 13-70 (KDLRRKIKKTVKKILESSNLYKITEIKAREEASLKLDLDLSQDPYKVIVKEEVENFLE).

As to quaternary structure, associated with the Mediator complex.

Its subcellular location is the nucleus. The polypeptide is Mediator-associated protein 3 (Arabidopsis thaliana (Mouse-ear cress)).